Consider the following 265-residue polypeptide: Probable enoyl-CoA hydratase 1, peroxisomal (265 aa).

Met-1 is modified (N-acetylmethionine). Residues 68–72 (SGVDL) and Ala-112 contribute to the substrate site. The Microbody targeting signal motif lies at 263-265 (SKL).

It belongs to the enoyl-CoA hydratase/isomerase family.

Its subcellular location is the peroxisome. It catalyses the reaction a (3S)-3-hydroxyacyl-CoA = a (2E)-enoyl-CoA + H2O. It carries out the reaction a 4-saturated-(3S)-3-hydroxyacyl-CoA = a (3E)-enoyl-CoA + H2O. Its pathway is lipid metabolism; fatty acid beta-oxidation. In terms of biological role, straight-chain enoyl-CoA thioesters from C4 up to at least C16 are processed, although with decreasing catalytic rate. This Arabidopsis thaliana (Mouse-ear cress) protein is Probable enoyl-CoA hydratase 1, peroxisomal.